Here is an 86-residue protein sequence, read N- to C-terminus: Acyl carrier protein (86 aa).

Residues 10 to 85 (DKIEQKVIEM…DVIQYIKERQ (76 aa)) form the Carrier domain. Ser-45 is modified (O-(pantetheine 4'-phosphoryl)serine).

It belongs to the acyl carrier protein (ACP) family. In terms of processing, 4'-phosphopantetheine is transferred from CoA to a specific serine of apo-ACP by AcpS. This modification is essential for activity because fatty acids are bound in thioester linkage to the sulfhydryl of the prosthetic group.

It localises to the cytoplasm. It participates in lipid metabolism; fatty acid biosynthesis. Functionally, carrier of the growing fatty acid chain in fatty acid biosynthesis. The chain is Acyl carrier protein from Rickettsia canadensis (strain McKiel).